The sequence spans 300 residues: Probable mitochondrial 2-oxodicarboxylate carrier (300 aa).

Residues 1–20 (MTSKGNAGNPPTPTPAPVKS) are disordered. Solcar repeat units follow at residues 21 to 104 (QPLW…YEKQ), 114 to 200 (PTQM…IKSA), and 209 to 295 (GVLV…VMKL). A run of 6 helical transmembrane segments spans residues 27–47 (LVSG…LDVV), 74–93 (LKMY…KRAI), 120–140 (IGSG…FELV), 171–191 (GFFK…GGYF), 209–229 (GVLV…TMLN), and 278–298 (LGPG…LLAG).

This sequence belongs to the mitochondrial carrier (TC 2.A.29) family.

It localises to the mitochondrion inner membrane. The catalysed reaction is 2-oxoadipate(in) + 2-oxoglutarate(out) = 2-oxoadipate(out) + 2-oxoglutarate(in). The enzyme catalyses hexanedioate(in) + 2-oxoglutarate(out) = hexanedioate(out) + 2-oxoglutarate(in). It catalyses the reaction L-2-aminoadipate(in) + 2-oxoglutarate(out) = L-2-aminoadipate(out) + 2-oxoglutarate(in). It carries out the reaction glutarate(in) + 2-oxoglutarate(out) = glutarate(out) + 2-oxoglutarate(in). The catalysed reaction is 2-oxoheptanedioate(in) + 2-oxoglutarate(out) = 2-oxoheptanedioate(out) + 2-oxoglutarate(in). The enzyme catalyses heptanedioate(in) + 2-oxoglutarate(out) = heptanedioate(out) + 2-oxoglutarate(in). It catalyses the reaction citrate(in) + 2-oxoglutarate(out) = citrate(out) + 2-oxoglutarate(in). Transports dicarboxylates across the inner membranes of mitochondria by a counter-exchange mechanism. Can transport 2-oxoadipate (2-oxohexanedioate), 2-oxoglutarate, adipate (hexanedioate), glutarate, and to a lesser extent, pimelate (heptanedioate), 2-oxopimelate (2-oxoheptanedioate), 2-aminoadipate (2-aminohexanedioate), oxaloacetate, and citrate. Plays a central role in catabolism of lysine, hydroxylysine, and tryptophan, by transporting common metabolite intermediates (such as 2-oxoadipate) into the mitochondria, where it is converted into acetyl-CoA and can enter the citric acid (TCA) cycle. This Dictyostelium discoideum (Social amoeba) protein is Probable mitochondrial 2-oxodicarboxylate carrier (mcfT).